We begin with the raw amino-acid sequence, 70 residues long: Turripeptide Ici9.2 (70 aa).

Residues 1–20 (MKVYCLLLVLLVGLVSQAQG) form the signal peptide. A Kazal-like domain is found at 21-70 (QLDKKCQTMCTMEYLPVCGSDGTTYPNKCTLTSTACVNQMDITVLHNGEC). Cystine bridges form between cysteine 26/cysteine 56, cysteine 30/cysteine 49, and cysteine 38/cysteine 70.

Belongs to the conopeptide P-like superfamily. Expressed by the venom duct.

It is found in the secreted. In terms of biological role, acts as a neurotoxin by inhibiting an ion channel. May also act as a serine protease inhibitor, since it possess the kazal serine protease inhibitor signature. This chain is Turripeptide Ici9.2, found in Iotyrris cingulifera (Sea snail).